Reading from the N-terminus, the 365-residue chain is S-adenosylmethionine:tRNA ribosyltransferase-isomerase (365 aa).

It belongs to the QueA family. As to quaternary structure, monomer.

Its subcellular location is the cytoplasm. It carries out the reaction 7-aminomethyl-7-carbaguanosine(34) in tRNA + S-adenosyl-L-methionine = epoxyqueuosine(34) in tRNA + adenine + L-methionine + 2 H(+). Its pathway is tRNA modification; tRNA-queuosine biosynthesis. Transfers and isomerizes the ribose moiety from AdoMet to the 7-aminomethyl group of 7-deazaguanine (preQ1-tRNA) to give epoxyqueuosine (oQ-tRNA). This Helicobacter hepaticus (strain ATCC 51449 / 3B1) protein is S-adenosylmethionine:tRNA ribosyltransferase-isomerase.